The chain runs to 352 residues: Anthranilate phosphoribosyltransferase (352 aa).

Residues Gly94, 97-98 (GS), Ser102, 104-107 (NIST), 122-130 (KHGNRAVSS), and Ser134 each bind 5-phospho-alpha-D-ribose 1-diphosphate. Gly94 is an anthranilate binding site. Ser106 is a binding site for Mg(2+). Asn125 contacts anthranilate. Arg180 contacts anthranilate. 2 residues coordinate Mg(2+): Asp239 and Glu240.

Belongs to the anthranilate phosphoribosyltransferase family. In terms of assembly, homodimer. The cofactor is Mg(2+).

The enzyme catalyses N-(5-phospho-beta-D-ribosyl)anthranilate + diphosphate = 5-phospho-alpha-D-ribose 1-diphosphate + anthranilate. The protein operates within amino-acid biosynthesis; L-tryptophan biosynthesis; L-tryptophan from chorismate: step 2/5. In terms of biological role, catalyzes the transfer of the phosphoribosyl group of 5-phosphorylribose-1-pyrophosphate (PRPP) to anthranilate to yield N-(5'-phosphoribosyl)-anthranilate (PRA). This is Anthranilate phosphoribosyltransferase from Geobacter sp. (strain M21).